A 353-amino-acid chain; its full sequence is Photosystem II D2 protein (353 aa).

Thr2 bears the N-acetylthreonine mark. A Phosphothreonine modification is found at Thr2. A helical membrane pass occupies residues 41–61 (CAYFAVGGWFTGTTFVTSWYT). Position 118 (His118) interacts with chlorophyll a. A helical transmembrane segment spans residues 125-141 (GFMLRQFELARSVQLRP). Pheophytin a is bound by residues Gln130 and Asn143. A helical membrane pass occupies residues 153–166 (VFVSVFLIYPLGQS). His198 provides a ligand contact to chlorophyll a. The helical transmembrane segment at 208 to 228 (AALLCAIHGATVENTLFEDGD) threads the bilayer. His215 and Phe262 together coordinate a plastoquinone. His215 contributes to the Fe cation binding site. Fe cation is bound at residue His269. A helical membrane pass occupies residues 279–295 (GLWMSALGVVGLALNLR).

The protein belongs to the reaction center PufL/M/PsbA/D family. As to quaternary structure, PSII is composed of 1 copy each of membrane proteins PsbA, PsbB, PsbC, PsbD, PsbE, PsbF, PsbH, PsbI, PsbJ, PsbK, PsbL, PsbM, PsbT, PsbX, PsbY, PsbZ, Psb30/Ycf12, at least 3 peripheral proteins of the oxygen-evolving complex and a large number of cofactors. It forms dimeric complexes. The D1/D2 heterodimer binds P680, chlorophylls that are the primary electron donor of PSII, and subsequent electron acceptors. It shares a non-heme iron and each subunit binds pheophytin, quinone, additional chlorophylls, carotenoids and lipids. There is also a Cl(-1) ion associated with D1 and D2, which is required for oxygen evolution. The PSII complex binds additional chlorophylls, carotenoids and specific lipids. is required as a cofactor.

It is found in the plastid. The protein resides in the chloroplast thylakoid membrane. It catalyses the reaction 2 a plastoquinone + 4 hnu + 2 H2O = 2 a plastoquinol + O2. Functionally, photosystem II (PSII) is a light-driven water:plastoquinone oxidoreductase that uses light energy to abstract electrons from H(2)O, generating O(2) and a proton gradient subsequently used for ATP formation. It consists of a core antenna complex that captures photons, and an electron transfer chain that converts photonic excitation into a charge separation. The D1/D2 (PsbA/PsbD) reaction center heterodimer binds P680, the primary electron donor of PSII as well as several subsequent electron acceptors. D2 is needed for assembly of a stable PSII complex. This Cicer arietinum (Chickpea) protein is Photosystem II D2 protein.